The chain runs to 573 residues: MTHSKGRPVTYKTSASPESGGGFVDWTLNLNTIQSDKFLNLLLSMVPVIYQKNQEDRHKKVNGIWQDGLSGAAQTFSKRSEPHLDYHEFSEQAFHSSSSGHTPASCSPKYDDYAGYNYCDGREASETTAMLQDEDLSSEGDDVIVETSQRIPKESSGVMALQILVPFLLAGFGTVSAGMVLDIVQHWEVFKNVTEVFILVPALLGLKGNLEMTLASRLSTAVNVGKMDSPIEKWNLIIGNLALKQVQATVVGFLAAVAAIILGWIPEGKYYLSHSILLCSSSVATAFIASLLQGIIMVGVIVGSKKTGINPDNVATPIAASFGDLITLAILAWISQGLYSCLETYYYISPLVCAFFLALTPIWIIIAAKHPATRTVLHSGWEPVITAMVISSIGGLILDTTVSDPNLVGIVVYTPVINGIGGNLVAIQASRISTYLHLHSIPGELPEEPKGCSYPFRTFFGSGVNNKSAQVLLLFVIPGHLIFLYTIHLMKSGHTSLTVVFVVVYLFAAVLQVFTLLWIADWMVHRFWRKGKDPDSFSIPYLTALGDLLGTALLALSFHFLWLIGDRDGDVGD.

The Extracellular segment spans residues 1–162; it reads MTHSKGRPVT…KESSGVMALQ (162 aa). S137 and S138 each carry phosphoserine. Residues 163–183 form a helical membrane-spanning segment; it reads ILVPFLLAGFGTVSAGMVLDI. Over 184–195 the chain is Cytoplasmic; it reads VQHWEVFKNVTE. The helical transmembrane segment at 196–216 threads the bilayer; sequence VFILVPALLGLKGNLEMTLAS. Residues 217–245 lie on the Extracellular side of the membrane; the sequence is RLSTAVNVGKMDSPIEKWNLIIGNLALKQ. The helical transmembrane segment at 246–266 threads the bilayer; sequence VQATVVGFLAAVAAIILGWIP. Topologically, residues 267-282 are cytoplasmic; the sequence is EGKYYLSHSILLCSSS. A helical membrane pass occupies residues 283–303; the sequence is VATAFIASLLQGIIMVGVIVG. At 304-313 the chain is on the extracellular side; sequence SKKTGINPDN. A helical membrane pass occupies residues 314 to 334; that stretch reads VATPIAASFGDLITLAILAWI. At 335–347 the chain is on the cytoplasmic side; it reads SQGLYSCLETYYY. The chain crosses the membrane as a helical span at residues 348–368; sequence ISPLVCAFFLALTPIWIIIAA. The Extracellular segment spans residues 369-376; it reads KHPATRTV. A helical membrane pass occupies residues 377–397; sequence LHSGWEPVITAMVISSIGGLI. The Cytoplasmic segment spans residues 398–406; the sequence is LDTTVSDPN. Residues 407-427 traverse the membrane as a helical segment; the sequence is LVGIVVYTPVINGIGGNLVAI. Topologically, residues 428-469 are extracellular; the sequence is QASRISTYLHLHSIPGELPEEPKGCSYPFRTFFGSGVNNKSA. The helical transmembrane segment at 470–490 threads the bilayer; sequence QVLLLFVIPGHLIFLYTIHLM. At 491-498 the chain is on the cytoplasmic side; the sequence is KSGHTSLT. The helical transmembrane segment at 499–519 threads the bilayer; sequence VVFVVVYLFAAVLQVFTLLWI. The Extracellular segment spans residues 520–543; sequence ADWMVHRFWRKGKDPDSFSIPYLT. The chain crosses the membrane as a helical span at residues 544 to 564; it reads ALGDLLGTALLALSFHFLWLI. The Cytoplasmic portion of the chain corresponds to 565–573; it reads GDRDGDVGD.

It belongs to the SLC41A transporter family.

Its subcellular location is the cell membrane. It catalyses the reaction Mg(2+)(in) = Mg(2+)(out). The catalysed reaction is Mn(2+)(in) = Mn(2+)(out). The enzyme catalyses Co(2+)(in) = Co(2+)(out). It carries out the reaction Ni(2+)(in) = Ni(2+)(out). It catalyses the reaction Fe(2+)(in) = Fe(2+)(out). In terms of biological role, acts as a plasma-membrane magnesium transporter. Can also mediate the transport of other divalent metal cations in an order of Ba(2+) &gt; Ni(2+) &gt; Co(2+) &gt; Fe(2+) &gt; Mn(2+). This is Solute carrier family 41 member 2 (Slc41a2) from Mus musculus (Mouse).